We begin with the raw amino-acid sequence, 239 residues long: ATP synthase subunit a (239 aa).

6 helical membrane-spanning segments follow: residues 31–51 (FLLQPHVTYTWVVMLVLLGLG), 91–111 (VFPLIASLGMFILFSNYLGMI), 125–145 (AACALISVVFTHVIGIKFHGV), 151–171 (FMGPVWWLTPLIMPIEIIGHI), 194–214 (ILFFLAGFYLAPLPMMFLGLF), and 215–235 (TGFIQAFIFCLLSMMYFAGAI).

Belongs to the ATPase A chain family. In terms of assembly, F-type ATPases have 2 components, CF(1) - the catalytic core - and CF(0) - the membrane proton channel. CF(1) has five subunits: alpha(3), beta(3), gamma(1), delta(1), epsilon(1). CF(0) has three main subunits: a(1), b(2) and c(9-12). The alpha and beta chains form an alternating ring which encloses part of the gamma chain. CF(1) is attached to CF(0) by a central stalk formed by the gamma and epsilon chains, while a peripheral stalk is formed by the delta and b chains.

The protein localises to the cell inner membrane. In terms of biological role, key component of the proton channel; it plays a direct role in the translocation of protons across the membrane. This chain is ATP synthase subunit a, found in Syntrophobacter fumaroxidans (strain DSM 10017 / MPOB).